We begin with the raw amino-acid sequence, 872 residues long: Leucine--tRNA ligase (872 aa).

The short motif at 42–52 (PYPSGSLHMGH) is the 'HIGH' region element. The 'KMSKS' region motif lies at 634–638 (TMSKS). An ATP-binding site is contributed by Lys637.

This sequence belongs to the class-I aminoacyl-tRNA synthetase family.

The protein localises to the cytoplasm. It catalyses the reaction tRNA(Leu) + L-leucine + ATP = L-leucyl-tRNA(Leu) + AMP + diphosphate. This is Leucine--tRNA ligase from Nostoc sp. (strain PCC 7120 / SAG 25.82 / UTEX 2576).